The chain runs to 1114 residues: Translation initiation factor IF-2 (1114 aa).

2 disordered regions span residues 69–102 (SIKKDNFKQNKSPSISSKKETPLKDNSNKKPLLI) and 181–507 (INNN…KRRA). Basic and acidic residues predominate over residues 85-96 (SKKETPLKDNSN). The span at 181–198 (INNNVKSNESSQNISSAG) shows a compositional bias: polar residues. Over residues 240–251 (INPNKQNNKQNI) the composition is skewed to low complexity. Over residues 252–261 (AFKQTGSNRI) the composition is skewed to polar residues. Composition is skewed to low complexity over residues 262–278 (GSPNRPGMPNNRPGLRN), 290–309 (NRQGNPNRPGMPNNRPGLRN), and 321–337 (NRQGNPNRPGMPNNRPG). The span at 365–375 (NSEKDNKDKNN) shows a compositional bias: basic and acidic residues. Residues 376–385 (NAKQNINGPN) are compositionally biased toward low complexity. The segment covering 417–431 (GKTDWDDSAKLEALR) has biased composition (basic and acidic residues). Residues 489 to 505 (KQFKKKKKETTRQRQKR) are compositionally biased toward basic residues. The region spanning 606–778 (RRPPVITVMG…ILLVSEVEDL (173 aa)) is the tr-type G domain. A G1 region spans residues 615-622 (GHVDHGKT). Position 615 to 622 (615 to 622 (GHVDHGKT)) interacts with GTP. Residues 640-644 (GITQH) form a G2 region. A G3 region spans residues 665–668 (DTPG). GTP contacts are provided by residues 665–669 (DTPGH) and 719–722 (NKID). The tract at residues 719 to 722 (NKID) is G4. Residues 755 to 757 (SAI) form a G5 region.

Belongs to the TRAFAC class translation factor GTPase superfamily. Classic translation factor GTPase family. IF-2 subfamily.

It localises to the cytoplasm. Functionally, one of the essential components for the initiation of protein synthesis. Protects formylmethionyl-tRNA from spontaneous hydrolysis and promotes its binding to the 30S ribosomal subunits. Also involved in the hydrolysis of GTP during the formation of the 70S ribosomal complex. The polypeptide is Translation initiation factor IF-2 (Prochlorococcus marinus (strain MIT 9301)).